Consider the following 32-residue polypeptide: Cytochrome b6-f complex subunit 7 (32 aa).

Residues 9-27 traverse the membrane as a helical segment; it reads AAVFWVLIPVGLLGGVLLL.

It belongs to the PetM family. The 4 large subunits of the cytochrome b6-f complex are cytochrome b6, subunit IV (17 kDa polypeptide, PetD), cytochrome f and the Rieske protein, while the 4 small subunits are PetG, PetL, PetM and PetN. The complex functions as a dimer.

It localises to the cellular thylakoid membrane. Its function is as follows. Component of the cytochrome b6-f complex, which mediates electron transfer between photosystem II (PSII) and photosystem I (PSI), cyclic electron flow around PSI, and state transitions. The chain is Cytochrome b6-f complex subunit 7 from Prochlorococcus marinus (strain NATL1A).